A 251-amino-acid chain; its full sequence is tRNA (guanine-N(1)-)-methyltransferase (251 aa).

Residues glycine 113 and isoleucine 133–leucine 138 contribute to the S-adenosyl-L-methionine site.

This sequence belongs to the RNA methyltransferase TrmD family. Homodimer.

It localises to the cytoplasm. The catalysed reaction is guanosine(37) in tRNA + S-adenosyl-L-methionine = N(1)-methylguanosine(37) in tRNA + S-adenosyl-L-homocysteine + H(+). Functionally, specifically methylates guanosine-37 in various tRNAs. In Pectobacterium atrosepticum (strain SCRI 1043 / ATCC BAA-672) (Erwinia carotovora subsp. atroseptica), this protein is tRNA (guanine-N(1)-)-methyltransferase.